Here is a 530-residue protein sequence, read N- to C-terminus: Phosphoenolpyruvate carboxykinase (ATP) (530 aa).

Residues Arg56, Tyr196, and Lys202 each coordinate substrate. Residues Lys202, His221, and 237-245 (GLSGTGKTT) each bind ATP. The Mn(2+) site is built by Lys202 and His221. Mn(2+) is bound at residue Asp258. ATP is bound by residues Glu286, Arg322, 438–439 (RI), and Thr444. Arg322 serves as a coordination point for substrate.

This sequence belongs to the phosphoenolpyruvate carboxykinase (ATP) family. In terms of assembly, monomer. Mn(2+) is required as a cofactor.

It localises to the cytoplasm. The enzyme catalyses oxaloacetate + ATP = phosphoenolpyruvate + ADP + CO2. The protein operates within carbohydrate biosynthesis; gluconeogenesis. Functionally, involved in the gluconeogenesis. Catalyzes the conversion of oxaloacetate (OAA) to phosphoenolpyruvate (PEP) through direct phosphoryl transfer between the nucleoside triphosphate and OAA. The protein is Phosphoenolpyruvate carboxykinase (ATP) of Photobacterium profundum (strain SS9).